The sequence spans 165 residues: 2-C-methyl-D-erythritol 2,4-cyclodiphosphate synthase (165 aa).

A divalent metal cation is bound by residues Asp8 and His10. 4-CDP-2-C-methyl-D-erythritol 2-phosphate is bound by residues 8–10 and 34–35; these read DVH and HS. His42 is a binding site for a divalent metal cation. Residues 56-58, 61-65, 132-135, Phe139, and Arg142 each bind 4-CDP-2-C-methyl-D-erythritol 2-phosphate; these read DIG, FPDTD, and TTTE.

This sequence belongs to the IspF family. In terms of assembly, homotrimer. It depends on a divalent metal cation as a cofactor.

It carries out the reaction 4-CDP-2-C-methyl-D-erythritol 2-phosphate = 2-C-methyl-D-erythritol 2,4-cyclic diphosphate + CMP. Its pathway is isoprenoid biosynthesis; isopentenyl diphosphate biosynthesis via DXP pathway; isopentenyl diphosphate from 1-deoxy-D-xylulose 5-phosphate: step 4/6. Its function is as follows. Involved in the biosynthesis of isopentenyl diphosphate (IPP) and dimethylallyl diphosphate (DMAPP), two major building blocks of isoprenoid compounds. Catalyzes the conversion of 4-diphosphocytidyl-2-C-methyl-D-erythritol 2-phosphate (CDP-ME2P) to 2-C-methyl-D-erythritol 2,4-cyclodiphosphate (ME-CPP) with a corresponding release of cytidine 5-monophosphate (CMP). This Halothermothrix orenii (strain H 168 / OCM 544 / DSM 9562) protein is 2-C-methyl-D-erythritol 2,4-cyclodiphosphate synthase.